The primary structure comprises 405 residues: Imidazolonepropionase (405 aa).

The Fe(3+) site is built by His73 and His75. The Zn(2+) site is built by His73 and His75. 3 residues coordinate 4-imidazolone-5-propanoate: Arg82, Tyr145, and His178. Tyr145 serves as a coordination point for N-formimidoyl-L-glutamate. Residue His243 participates in Fe(3+) binding. Residue His243 participates in Zn(2+) binding. Gln246 is a 4-imidazolone-5-propanoate binding site. Residue Asp318 coordinates Fe(3+). A Zn(2+)-binding site is contributed by Asp318. N-formimidoyl-L-glutamate contacts are provided by Asn320 and Gly322. 4-imidazolone-5-propanoate is bound at residue Thr323.

Belongs to the metallo-dependent hydrolases superfamily. HutI family. Zn(2+) serves as cofactor. The cofactor is Fe(3+).

It is found in the cytoplasm. It carries out the reaction 4-imidazolone-5-propanoate + H2O = N-formimidoyl-L-glutamate. The protein operates within amino-acid degradation; L-histidine degradation into L-glutamate; N-formimidoyl-L-glutamate from L-histidine: step 3/3. Catalyzes the hydrolytic cleavage of the carbon-nitrogen bond in imidazolone-5-propanoate to yield N-formimidoyl-L-glutamate. It is the third step in the universal histidine degradation pathway. The protein is Imidazolonepropionase of Brucella abortus (strain S19).